A 154-amino-acid chain; its full sequence is Myoglobin (154 aa).

In terms of domain architecture, Globin spans 2–148 (GLSDGEWQLV…FRNDMAAKYK (147 aa)). Serine 4 carries the post-translational modification Phosphoserine. Residue histidine 65 participates in nitrite binding. O2 is bound at residue histidine 65. A Phosphothreonine modification is found at threonine 68. Residue histidine 94 participates in heme b binding.

It belongs to the globin family. In terms of assembly, monomeric.

It localises to the cytoplasm. The protein resides in the sarcoplasm. The catalysed reaction is Fe(III)-heme b-[protein] + nitric oxide + H2O = Fe(II)-heme b-[protein] + nitrite + 2 H(+). It carries out the reaction H2O2 + AH2 = A + 2 H2O. In terms of biological role, monomeric heme protein which primary function is to store oxygen and facilitate its diffusion within muscle tissues. Reversibly binds oxygen through a pentacoordinated heme iron and enables its timely and efficient release as needed during periods of heightened demand. Depending on the oxidative conditions of tissues and cells, and in addition to its ability to bind oxygen, it also has a nitrite reductase activity whereby it regulates the production of bioactive nitric oxide. Under stress conditions, like hypoxia and anoxia, it also protects cells against reactive oxygen species thanks to its pseudoperoxidase activity. This is Myoglobin (MB) from Saimiri sciureus (Common squirrel monkey).